The primary structure comprises 247 residues: Triosephosphate isomerase (247 aa).

9–11 (NWK) provides a ligand contact to substrate. His94 (electrophile) is an active-site residue. Catalysis depends on Glu166, which acts as the Proton acceptor. Substrate contacts are provided by residues Gly172, Ser211, and 232–233 (GG).

This sequence belongs to the triosephosphate isomerase family. Homodimer.

It localises to the cytoplasm. The enzyme catalyses D-glyceraldehyde 3-phosphate = dihydroxyacetone phosphate. The protein operates within carbohydrate biosynthesis; gluconeogenesis. It functions in the pathway carbohydrate degradation; glycolysis; D-glyceraldehyde 3-phosphate from glycerone phosphate: step 1/1. Functionally, involved in the gluconeogenesis. Catalyzes stereospecifically the conversion of dihydroxyacetone phosphate (DHAP) to D-glyceraldehyde-3-phosphate (G3P). The protein is Triosephosphate isomerase of Cupriavidus taiwanensis (strain DSM 17343 / BCRC 17206 / CCUG 44338 / CIP 107171 / LMG 19424 / R1) (Ralstonia taiwanensis (strain LMG 19424)).